A 232-amino-acid chain; its full sequence is Fibrillarin-like rRNA/tRNA 2'-O-methyltransferase (232 aa).

S-adenosyl-L-methionine contacts are provided by residues 87-88 (TT), 105-106 (EF), 130-131 (DA), and 150-153 (DVAQ).

This sequence belongs to the methyltransferase superfamily. Fibrillarin family. In terms of assembly, interacts with nop5. Component of box C/D small ribonucleoprotein (sRNP) particles that contain rpl7ae, FlpA and nop5, plus a guide RNA.

Functionally, involved in pre-rRNA and tRNA processing. Utilizes the methyl donor S-adenosyl-L-methionine to catalyze the site-specific 2'-hydroxyl methylation of ribose moieties in rRNA and tRNA. Site specificity is provided by a guide RNA that base pairs with the substrate. Methylation occurs at a characteristic distance from the sequence involved in base pairing with the guide RNA. This Methanococcus maripaludis (strain C7 / ATCC BAA-1331) protein is Fibrillarin-like rRNA/tRNA 2'-O-methyltransferase.